Reading from the N-terminus, the 218-residue chain is Grancalcin (218 aa).

EF-hand domains are found at residues 49–84 (SSAG…SGIS), 85–119 (GTYS…KELW), 120–155 (SALN…MGYR), and 156–191 (LSPQ…ALTD). Residues aspartate 103, aspartate 105, threonine 107, lysine 109, aspartate 133, aspartate 135, serine 137, threonine 139, and glutamate 144 each coordinate Ca(2+).

In terms of assembly, homodimer. Interacts with SRI and LCP1.

Its subcellular location is the cytoplasm. The protein resides in the cytoplasmic granule membrane. Functionally, calcium-binding protein that may play a role in the adhesion of neutrophils to fibronectin. May play a role in the formation of focal adhesions. This chain is Grancalcin (GCA), found in Pongo abelii (Sumatran orangutan).